Reading from the N-terminus, the 569-residue chain is Beta-lactamase-like protein 4 (569 aa).

A signal peptide spans 1 to 19 (MKYYLYLFLLFTFANLLYS). Residues Asn87, Asn172, Asn239, Asn240, Asn250, Asn299, Asn343, Asn412, Asn419, Asn436, Asn468, Asn509, and Asn535 are each glycosylated (N-linked (GlcNAc...) asparagine).

Belongs to the beta-lactamase family.

It is found in the secreted. This Dictyostelium discoideum (Social amoeba) protein is Beta-lactamase-like protein 4.